The sequence spans 745 residues: Probable xyloglucan glycosyltransferase 3 (745 aa).

2 helical membrane passes run 116–136 (GFLLLSLAMLAFETVAHLKGW) and 196–216 (IDYIAWAIQKLSGFCIALFMV). Aspartate 300 is a catalytic residue. Substrate is bound by residues aspartate 359 and aspartate 361. Residue aspartate 453 is part of the active site. 4 helical membrane passes run 531–551 (LILPFYSFTLFCVILPLTMFV), 556–576 (LPIWVICYVPVIMSVLNILPA), 695–715 (IFKKELALAFLLLTAATRSLL), and 720–740 (LHFYFLLFQGVTFLAVGLDLI).

This sequence belongs to the glycosyltransferase 2 family. Plant cellulose synthase-like C subfamily.

It is found in the golgi apparatus membrane. Functionally, probable beta-1,4-glucan synthase rather involved in the synthesis of the xyloglucan backbone than cellulose. Seems to work simultaneously with xyloglucan 6-xylosyltransferase. Xyloglucan is a noncellulosic polysaccharides of plant cell wall and consists of a glucan backbone substituted by xylose, galactose and fucose. The sequence is that of Probable xyloglucan glycosyltransferase 3 (CSLC3) from Oryza sativa subsp. japonica (Rice).